Here is a 357-residue protein sequence, read N- to C-terminus: Phenylalanine--tRNA ligase alpha subunit (357 aa).

Mg(2+) is bound at residue glutamate 259.

The protein belongs to the class-II aminoacyl-tRNA synthetase family. Phe-tRNA synthetase alpha subunit type 1 subfamily. Tetramer of two alpha and two beta subunits. Requires Mg(2+) as cofactor.

It localises to the cytoplasm. The catalysed reaction is tRNA(Phe) + L-phenylalanine + ATP = L-phenylalanyl-tRNA(Phe) + AMP + diphosphate + H(+). The chain is Phenylalanine--tRNA ligase alpha subunit from Jannaschia sp. (strain CCS1).